The primary structure comprises 276 residues: 2-dehydro-3-deoxyphosphooctonate aldolase (276 aa).

Belongs to the KdsA family.

The protein localises to the cytoplasm. It carries out the reaction D-arabinose 5-phosphate + phosphoenolpyruvate + H2O = 3-deoxy-alpha-D-manno-2-octulosonate-8-phosphate + phosphate. The protein operates within carbohydrate biosynthesis; 3-deoxy-D-manno-octulosonate biosynthesis; 3-deoxy-D-manno-octulosonate from D-ribulose 5-phosphate: step 2/3. In Stenotrophomonas maltophilia (strain K279a), this protein is 2-dehydro-3-deoxyphosphooctonate aldolase.